The chain runs to 835 residues: Invasin (835 aa).

Positions 451–541 (VITSEVTDDG…QQATVDVRFA (91 aa)) constitute a Big-1 domain.

The protein belongs to the intimin/invasin family.

The protein resides in the cell outer membrane. Functionally, invasin is a protein that allows enteric bacteria to penetrate cultured mammalian cells. The entry of invasin in the cell is mediated by binding several beta-1 chain integrins. The protein is Invasin of Yersinia enterocolitica.